The primary structure comprises 179 residues: Small ribosomal subunit protein uS5 (179 aa).

An S5 DRBM domain is found at 22-85; it reads MIEKLVAVNR…EYARKRMANV (64 aa).

It belongs to the universal ribosomal protein uS5 family. Part of the 30S ribosomal subunit. Contacts proteins S4 and S8.

Functionally, with S4 and S12 plays an important role in translational accuracy. Located at the back of the 30S subunit body where it stabilizes the conformation of the head with respect to the body. This Xylella fastidiosa (strain M12) protein is Small ribosomal subunit protein uS5.